A 271-amino-acid chain; its full sequence is Fatty acid elongase A (271 aa).

7 consecutive transmembrane segments (helical) span residues Ile35–Phe55, Ala68–Ile88, Ile102–Ser122, Ser139–Leu159, Cys165–Phe185, His198–Tyr220, and Thr237–Val257.

Belongs to the ELO family.

It is found in the membrane. The catalysed reaction is a very-long-chain acyl-CoA + malonyl-CoA + H(+) = a very-long-chain 3-oxoacyl-CoA + CO2 + CoA. Functionally, fatty acid elongase with strict substrate specificity for monounsaturated fatty acids, in particular 16:1 (delta-9) to produce the unusual 18:1 (delta-11) fatty acid. This is Fatty acid elongase A (eloA) from Dictyostelium discoideum (Social amoeba).